The primary structure comprises 374 residues: DNA/RNA-binding protein ALBA4 (374 aa).

The protein belongs to the histone-like Alba family.

Its subcellular location is the cytoplasm. It is found in the cell cortex. The protein resides in the perinuclear region. In terms of biological role, possesses DNA- and RNA-binding activities. Binds to DNA with relaxed sequence specificity. May associate with the subtelomeric TARE6 repeats. Regulates the abundance of transcript sub-populations in a stage-specific manner. Regulates activation of male gametocytes. Participates in the coordination of sporozoite development in the oocyst. The protein is DNA/RNA-binding protein ALBA4 of Plasmodium yoelii yoelii.